Here is a 244-residue protein sequence, read N- to C-terminus: 1-(5-phosphoribosyl)-5-[(5-phosphoribosylamino)methylideneamino] imidazole-4-carboxamide isomerase (244 aa).

Residue Asp-7 is the Proton acceptor of the active site. The active-site Proton donor is Asp-129.

This sequence belongs to the HisA/HisF family.

It localises to the cytoplasm. The enzyme catalyses 1-(5-phospho-beta-D-ribosyl)-5-[(5-phospho-beta-D-ribosylamino)methylideneamino]imidazole-4-carboxamide = 5-[(5-phospho-1-deoxy-D-ribulos-1-ylimino)methylamino]-1-(5-phospho-beta-D-ribosyl)imidazole-4-carboxamide. It participates in amino-acid biosynthesis; L-histidine biosynthesis; L-histidine from 5-phospho-alpha-D-ribose 1-diphosphate: step 4/9. In Pseudoalteromonas atlantica (strain T6c / ATCC BAA-1087), this protein is 1-(5-phosphoribosyl)-5-[(5-phosphoribosylamino)methylideneamino] imidazole-4-carboxamide isomerase.